A 169-amino-acid polypeptide reads, in one-letter code: Disulfide bond formation protein B (169 aa).

At 1 to 13 (MQALNHFSRIRLS) the chain is on the cytoplasmic side. The chain crosses the membrane as a helical span at residues 14-30 (WFLLLLCIIFFEASALT). The Periplasmic portion of the chain corresponds to 31–48 (FQHIMKLPPCVMCIYERV). An intrachain disulfide couples cysteine 40 to cysteine 43. A helical membrane pass occupies residues 49–64 (AMMGIGGAAIIGLLNP). The Cytoplasmic segment spans residues 65-71 (NNLIIRW). Residues 72–89 (CGFIAWGISAGWGLKLAL) form a helical membrane-spanning segment. At 90-144 (EHVDFQLNPSPFSTCDLFVTFPSWAPLNKWAPWMFEAYGDCSKIVWQFLTLTMPQ) the chain is on the periplasmic side. A disulfide bridge connects residues cysteine 104 and cysteine 130. Residues 145–163 (WLVIIFAGNLIALAIFVIA) form a helical membrane-spanning segment. Residues 164 to 169 (QFFNKK) lie on the Cytoplasmic side of the membrane.

The protein belongs to the DsbB family.

It is found in the cell inner membrane. In terms of biological role, required for disulfide bond formation in some periplasmic proteins. Acts by oxidizing the DsbA protein. The protein is Disulfide bond formation protein B of Aliivibrio fischeri (strain ATCC 700601 / ES114) (Vibrio fischeri).